The primary structure comprises 261 residues: Carbonic anhydrase 1 (261 aa).

Residues 1–31 form a disordered region; that stretch reads MASPDWGYDDKNGPEQWSKLYPIANGNNQSP. At Ala-2 the chain carries N-acetylalanine. Residues 4–261 enclose the Alpha-carbonic anhydrase domain; sequence PDWGYDDKNG…LKGRTVRASF (258 aa). His-65 acts as the Proton donor/acceptor in catalysis. Residues His-65, His-68, His-95, His-97, and His-120 each contribute to the Zn(2+) site. Residues Thr-200 and 200–201 contribute to the substrate site; that span reads TH. Residue His-201 participates in Zn(2+) binding. Positions 241-261 are disordered; it reads PMQHNNRPTQPLKGRTVRASF.

This sequence belongs to the alpha-carbonic anhydrase family. It depends on Zn(2+) as a cofactor.

Its subcellular location is the cytoplasm. The enzyme catalyses hydrogencarbonate + H(+) = CO2 + H2O. The catalysed reaction is urea = cyanamide + H2O. Activated by histamine, imidazole, L-adrenaline, L- and D-histidine, and L- and D-phenylalanine. Inhibited by coumarins, sulfonamide derivatives such as acetazolamide, benzenesulfonamide and derivatives (4-carboxyethylbenzene-sulfonamide, 4-carboxyethylbenzene-sulfonamide ethyl ester, 4-(acetyl-2-aminoethyl)benzene-sulfonamide, 4-aminoethylbenzene-sulfonamide), and 'prong inhibitors' BR15, BR17, BR22 and BR30. Activated by a short exposition to Foscarnet (phosphonoformate trisodium salt), but inhibited by a long one. Esterase activity weakly reduced by cyanamide. Functionally, catalyzes the reversible hydration of carbon dioxide. Can hydrate cyanamide to urea. The protein is Carbonic anhydrase 1 (CA1) of Homo sapiens (Human).